We begin with the raw amino-acid sequence, 431 residues long: UDP-N-acetylmuramoylalanine--D-glutamate ligase (431 aa).

Position 111–117 (111–117) interacts with ATP; sequence GTDGKST.

Belongs to the MurCDEF family.

The protein resides in the cytoplasm. The catalysed reaction is UDP-N-acetyl-alpha-D-muramoyl-L-alanine + D-glutamate + ATP = UDP-N-acetyl-alpha-D-muramoyl-L-alanyl-D-glutamate + ADP + phosphate + H(+). It participates in cell wall biogenesis; peptidoglycan biosynthesis. Functionally, cell wall formation. Catalyzes the addition of glutamate to the nucleotide precursor UDP-N-acetylmuramoyl-L-alanine (UMA). This is UDP-N-acetylmuramoylalanine--D-glutamate ligase from Petrotoga mobilis (strain DSM 10674 / SJ95).